The primary structure comprises 575 residues: Alpha-(1,6)-fucosyltransferase (575 aa).

Topologically, residues 1 to 9 are cytoplasmic; the sequence is MRPWTGSWR. A helical; Signal-anchor for type II membrane protein membrane pass occupies residues 10 to 30; that stretch reads WIMLILFAWGTLLFYIGGHLV. At 31–575 the chain is on the lumenal side; the sequence is RDNDHSDHSS…KYPTYPEADK (545 aa). 3 cysteine pairs are disulfide-bonded: cysteine 204-cysteine 266, cysteine 212-cysteine 230, and cysteine 218-cysteine 222. A GT23 domain is found at 206–493; the sequence is KAKKLVCNIN…PDASANFRSL (288 aa). The residue at position 278 (serine 278) is a Phosphoserine. The short motif at 299-305 is the SH3-binding element; it reads PRPPYLP. Positions 365–366 are important for donor substrate binding; that stretch reads RR. A disulfide bridge connects residues cysteine 465 and cysteine 472. Residues 502-563 form the SH3 domain; the sequence is PNAHNQIAIY…PSYKVREKIE (62 aa).

It belongs to the glycosyltransferase 23 family. Tyrosine phosphorylated by PKDCC/VLK. As to expression, highest expression in brain.

It localises to the golgi apparatus. It is found in the golgi stack membrane. It carries out the reaction N(4)-{beta-D-GlcNAc-(1-&gt;2)-alpha-D-Man-(1-&gt;3)-[beta-D-GlcNAc-(1-&gt;2)-alpha-D-Man-(1-&gt;6)]-beta-D-Man-(1-&gt;4)-beta-D-GlcNAc-(1-&gt;4)-beta-D-GlcNAc}-L-asparaginyl-[protein] + GDP-beta-L-fucose = an N(4)-{beta-D-GlcNAc-(1-&gt;2)-alpha-D-Man-(1-&gt;3)-[beta-D-GlcNAc-(1-&gt;2)-alpha-D-Man-(1-&gt;6)]-beta-D-Man-(1-&gt;4)-beta-D-GlcNAc-(1-&gt;4)-[alpha-L-Fuc-(1-&gt;6)]-beta-D-GlcNAc}-L-asparaginyl-[protein] + GDP + H(+). It functions in the pathway protein modification; protein glycosylation. Functionally, catalyzes the addition of fucose in alpha 1-6 linkage to the first GlcNAc residue, next to the peptide chains in N-glycans. The sequence is that of Alpha-(1,6)-fucosyltransferase (FUT8) from Sus scrofa (Pig).